Consider the following 1295-residue polypeptide: Phosphoribosylformylglycinamidine synthase (1295 aa).

Residues 305-327 form a disordered region; it reads WPGAATGSGGEIRDEGATGRGAK. Residues 307-318, 386-388, and alanine 678 contribute to the ATP site; these read GAATGSGGEIRD and TGY. Mg(2+) is bound by residues aspartate 679, glutamate 718, asparagine 722, and aspartate 884. Position 886 (serine 886) interacts with ATP. The region spanning 1042–1295 is the Glutamine amidotransferase type-1 domain; that stretch reads VAVLREQGVN…IFRNARKQLG (254 aa). The Nucleophile role is filled by cysteine 1135. Residues histidine 1260 and glutamate 1262 contribute to the active site.

It in the N-terminal section; belongs to the FGAMS family. In terms of assembly, monomer.

The protein resides in the cytoplasm. It catalyses the reaction N(2)-formyl-N(1)-(5-phospho-beta-D-ribosyl)glycinamide + L-glutamine + ATP + H2O = 2-formamido-N(1)-(5-O-phospho-beta-D-ribosyl)acetamidine + L-glutamate + ADP + phosphate + H(+). Its pathway is purine metabolism; IMP biosynthesis via de novo pathway; 5-amino-1-(5-phospho-D-ribosyl)imidazole from N(2)-formyl-N(1)-(5-phospho-D-ribosyl)glycinamide: step 1/2. Its function is as follows. Phosphoribosylformylglycinamidine synthase involved in the purines biosynthetic pathway. Catalyzes the ATP-dependent conversion of formylglycinamide ribonucleotide (FGAR) and glutamine to yield formylglycinamidine ribonucleotide (FGAM) and glutamate. The chain is Phosphoribosylformylglycinamidine synthase from Salmonella typhimurium (strain LT2 / SGSC1412 / ATCC 700720).